A 232-amino-acid polypeptide reads, in one-letter code: Orotate phosphoribosyltransferase (232 aa).

5-phospho-alpha-D-ribose 1-diphosphate contacts are provided by residues Arg107, Lys108, Lys111, His113, and 133-141 (EDLTTAGGS). Thr137 is a binding site for orotate.

This sequence belongs to the purine/pyrimidine phosphoribosyltransferase family. PyrE subfamily. Homodimer. Requires Mg(2+) as cofactor.

It catalyses the reaction orotidine 5'-phosphate + diphosphate = orotate + 5-phospho-alpha-D-ribose 1-diphosphate. Its pathway is pyrimidine metabolism; UMP biosynthesis via de novo pathway; UMP from orotate: step 1/2. In terms of biological role, catalyzes the transfer of a ribosyl phosphate group from 5-phosphoribose 1-diphosphate to orotate, leading to the formation of orotidine monophosphate (OMP). This Rhizobium rhizogenes (strain K84 / ATCC BAA-868) (Agrobacterium radiobacter) protein is Orotate phosphoribosyltransferase.